We begin with the raw amino-acid sequence, 201 residues long: Cytochrome c oxidase subunit 3 (201 aa).

The next 4 membrane-spanning stretches (helical) occupy residues 25–45 (VLGL…LFAA), 65–85 (LFVP…IHYG), 100–120 (WYWI…YEYL), and 137–157 (VMTG…LGVI).

This sequence belongs to the cytochrome c oxidase subunit 3 family.

It is found in the cell membrane. The catalysed reaction is 4 Fe(II)-[cytochrome c] + O2 + 8 H(+)(in) = 4 Fe(III)-[cytochrome c] + 2 H2O + 4 H(+)(out). This chain is Cytochrome c oxidase subunit 3 (ctaE), found in Thermostichus vulcanus (Synechococcus vulcanus).